The following is a 305-amino-acid chain: tRNA dimethylallyltransferase (305 aa).

8-15 (GPTGTGKS) lines the ATP pocket. Position 10-15 (10-15 (TGTGKS)) interacts with substrate.

The protein belongs to the IPP transferase family. Monomer. It depends on Mg(2+) as a cofactor.

It carries out the reaction adenosine(37) in tRNA + dimethylallyl diphosphate = N(6)-dimethylallyladenosine(37) in tRNA + diphosphate. Its function is as follows. Catalyzes the transfer of a dimethylallyl group onto the adenine at position 37 in tRNAs that read codons beginning with uridine, leading to the formation of N6-(dimethylallyl)adenosine (i(6)A). The sequence is that of tRNA dimethylallyltransferase from Mycobacterium sp. (strain JLS).